A 460-amino-acid polypeptide reads, in one-letter code: ATP synthase subunit beta (460 aa).

Residue G150 to T157 coordinates ATP.

Belongs to the ATPase alpha/beta chains family. F-type ATPases have 2 components, CF(1) - the catalytic core - and CF(0) - the membrane proton channel. CF(1) has five subunits: alpha(3), beta(3), gamma(1), delta(1), epsilon(1). CF(0) has three main subunits: a(1), b(2) and c(9-12). The alpha and beta chains form an alternating ring which encloses part of the gamma chain. CF(1) is attached to CF(0) by a central stalk formed by the gamma and epsilon chains, while a peripheral stalk is formed by the delta and b chains.

It localises to the cell inner membrane. The enzyme catalyses ATP + H2O + 4 H(+)(in) = ADP + phosphate + 5 H(+)(out). In terms of biological role, produces ATP from ADP in the presence of a proton gradient across the membrane. The catalytic sites are hosted primarily by the beta subunits. The sequence is that of ATP synthase subunit beta from Edwardsiella ictaluri (strain 93-146).